A 722-amino-acid chain; its full sequence is Metal transporter cnnm-5 (722 aa).

Positions 1 to 17 (MSLFLFAIFQLALGSPG) are cleaved as a signal peptide. Residues 18–139 (APNGPNVPLQ…AAAAKYMGDE (122 aa)) lie on the Extracellular side of the membrane. N-linked (GlcNAc...) asparagine glycosylation is found at Asn-102 and Asn-114. A CNNM transmembrane domain is found at 132–318 (AAKYMGDEIV…AQNEREKTIL (187 aa)). The helical transmembrane segment at 140–160 (IVFCFFCILMSAYASGMTLGY) threads the bilayer. Residues 161 to 196 (MKFSMIDLNTMLKIAEGDAAKKRVRRIMHFRRRSTQ) lie on the Cytoplasmic side of the membrane. A helical transmembrane segment spans residues 197–217 (LVVTFSLFSSVFTVLFTTTCE). Residues 218-227 (KMLHGVSNED) lie on the Extracellular side of the membrane. A helical transmembrane segment spans residues 228–248 (VLKMAVPALICLIFAEMIPQA). The Cytoplasmic segment spans residues 249–257 (VCNSKFGFN). The helical transmembrane segment at 258–278 (LAASLWFVTVIIFFVTLPIAY) threads the bilayer. At 279-722 (PASLVLGRFL…ETTPFMEKQE (444 aa)) the chain is on the extracellular side. Asn-320, Asn-349, and Asn-371 each carry an N-linked (GlcNAc...) asparagine glycan. CBS domains are found at residues 333–396 (MVPI…LIDE) and 413–473 (TVKF…KIDE). The tract at residues 584–607 (SQRSSSTVNSQQHRQQTTDNSRST) is disordered. Asn-639 is a glycosylation site (N-linked (GlcNAc...) asparagine). The segment at 686–722 (LNSRASTSTSTTPACRTPLSVDARSQDETTPFMEKQE) is disordered. Low complexity predominate over residues 688-703 (SRASTSTSTTPACRTP).

It belongs to the ACDP family.

The protein resides in the cell membrane. Probable metal transporter. Probably acts redundantly with the other metal transport proteins cnnm-1, cnnm-2, cnnm-3 and cnnm-4 to regulate Mg(2+) homeostasis. This is Metal transporter cnnm-5 from Caenorhabditis elegans.